The chain runs to 462 residues: L-seryl-tRNA(Sec) selenium transferase (462 aa).

Lysine 293 carries the N6-(pyridoxal phosphate)lysine modification.

It belongs to the SelA family. Requires pyridoxal 5'-phosphate as cofactor.

It is found in the cytoplasm. It carries out the reaction L-seryl-tRNA(Sec) + selenophosphate + H(+) = L-selenocysteinyl-tRNA(Sec) + phosphate. The protein operates within aminoacyl-tRNA biosynthesis; selenocysteinyl-tRNA(Sec) biosynthesis; selenocysteinyl-tRNA(Sec) from L-seryl-tRNA(Sec) (bacterial route): step 1/1. Converts seryl-tRNA(Sec) to selenocysteinyl-tRNA(Sec) required for selenoprotein biosynthesis. The chain is L-seryl-tRNA(Sec) selenium transferase from Clostridium botulinum (strain ATCC 19397 / Type A).